We begin with the raw amino-acid sequence, 359 residues long: DNA polymerase IV (359 aa).

The region spanning 4 to 185 is the UmuC domain; that stretch reads IIHIDMDCYF…LSLRKIPGVG (182 aa). Mg(2+) contacts are provided by Asp8 and Asp103. Residue Glu104 is part of the active site.

Belongs to the DNA polymerase type-Y family. As to quaternary structure, monomer. Requires Mg(2+) as cofactor.

Its subcellular location is the cytoplasm. The enzyme catalyses DNA(n) + a 2'-deoxyribonucleoside 5'-triphosphate = DNA(n+1) + diphosphate. Poorly processive, error-prone DNA polymerase involved in untargeted mutagenesis. Copies undamaged DNA at stalled replication forks, which arise in vivo from mismatched or misaligned primer ends. These misaligned primers can be extended by PolIV. Exhibits no 3'-5' exonuclease (proofreading) activity. May be involved in translesional synthesis, in conjunction with the beta clamp from PolIII. The polypeptide is DNA polymerase IV (Shewanella sp. (strain ANA-3)).